Here is a 453-residue protein sequence, read N- to C-terminus: Na(+)/H(+) antiporter NhaA (453 aa).

The next 11 helical transmembrane spans lie at 27-47, 78-98, 114-134, 143-163, 172-192, 201-221, 222-242, 316-336, 346-366, 385-405, and 421-441; these read FLHI…SALI, LHFW…GMEI, ILPI…YFIF, GWAV…ALLG, IILL…IAFF, GLLI…IGLA, SAWL…VTGV, PWVA…VSFA, FLIV…GIIT, WAGI…SIFV, and IGVL…GFIY.

Belongs to the NhaA Na(+)/H(+) (TC 2.A.33) antiporter family.

The protein localises to the cell inner membrane. The enzyme catalyses Na(+)(in) + 2 H(+)(out) = Na(+)(out) + 2 H(+)(in). In terms of biological role, na(+)/H(+) antiporter that extrudes sodium in exchange for external protons. The sequence is that of Na(+)/H(+) antiporter NhaA from Bartonella tribocorum (strain CIP 105476 / IBS 506).